A 315-amino-acid polypeptide reads, in one-letter code: tRNA dimethylallyltransferase (315 aa).

Position 18–25 (18–25 (GPTASGKT)) interacts with ATP. 20–25 (TASGKT) contributes to the substrate binding site. Interaction with substrate tRNA regions lie at residues 43 to 46 (DSAL), 167 to 171 (QRLSR), and 248 to 253 (RCVGYR).

The protein belongs to the IPP transferase family. As to quaternary structure, monomer. It depends on Mg(2+) as a cofactor.

It carries out the reaction adenosine(37) in tRNA + dimethylallyl diphosphate = N(6)-dimethylallyladenosine(37) in tRNA + diphosphate. Its function is as follows. Catalyzes the transfer of a dimethylallyl group onto the adenine at position 37 in tRNAs that read codons beginning with uridine, leading to the formation of N6-(dimethylallyl)adenosine (i(6)A). This Pseudoalteromonas atlantica (strain T6c / ATCC BAA-1087) protein is tRNA dimethylallyltransferase.